We begin with the raw amino-acid sequence, 342 residues long: Succinoglycan biosynthesis protein ExoU (342 aa).

Belongs to the glycosyltransferase 2 family.

The protein resides in the cytoplasm. It participates in glycan metabolism; exopolysaccharide biosynthesis. Its function is as follows. Glycosyltransferase required for the synthesis of succinoglycan (EPS I). Needed for the addition of the sixth sugar (glucose), catalyzes the formation of a beta-1,6 linkage between the fifth and sixth sugar. This Rhizobium meliloti (strain 1021) (Ensifer meliloti) protein is Succinoglycan biosynthesis protein ExoU (exoU).